A 323-amino-acid polypeptide reads, in one-letter code: tRNA U34 carboxymethyltransferase (323 aa).

Residues lysine 91, tryptophan 105, lysine 110, glycine 130, 152–154 (DPT), 181–182 (IE), methionine 196, tyrosine 200, and arginine 315 contribute to the carboxy-S-adenosyl-L-methionine site.

It belongs to the class I-like SAM-binding methyltransferase superfamily. CmoB family. As to quaternary structure, homotetramer.

The enzyme catalyses carboxy-S-adenosyl-L-methionine + 5-hydroxyuridine(34) in tRNA = 5-carboxymethoxyuridine(34) in tRNA + S-adenosyl-L-homocysteine + H(+). Functionally, catalyzes carboxymethyl transfer from carboxy-S-adenosyl-L-methionine (Cx-SAM) to 5-hydroxyuridine (ho5U) to form 5-carboxymethoxyuridine (cmo5U) at position 34 in tRNAs. This Escherichia coli O81 (strain ED1a) protein is tRNA U34 carboxymethyltransferase.